Consider the following 200-residue polypeptide: Holliday junction branch migration complex subunit RuvA (200 aa).

Positions 1-64 (MIGRIVGTLI…EDSHTLYGFI (64 aa)) are domain I. Residues 65-143 (DKNERALFRV…QAAKTDLFSA (79 aa)) are domain II. Residues 144-149 (PAVLRQ) form a flexible linker region. Residues 150–200 (VQADPRQEAEAALISLGYKPQEAAKAIAGVPVDAANSEDVIKAALKGMLRK) form a domain III region.

This sequence belongs to the RuvA family. Homotetramer. Forms an RuvA(8)-RuvB(12)-Holliday junction (HJ) complex. HJ DNA is sandwiched between 2 RuvA tetramers; dsDNA enters through RuvA and exits via RuvB. An RuvB hexamer assembles on each DNA strand where it exits the tetramer. Each RuvB hexamer is contacted by two RuvA subunits (via domain III) on 2 adjacent RuvB subunits; this complex drives branch migration. In the full resolvosome a probable DNA-RuvA(4)-RuvB(12)-RuvC(2) complex forms which resolves the HJ.

The protein localises to the cytoplasm. In terms of biological role, the RuvA-RuvB-RuvC complex processes Holliday junction (HJ) DNA during genetic recombination and DNA repair, while the RuvA-RuvB complex plays an important role in the rescue of blocked DNA replication forks via replication fork reversal (RFR). RuvA specifically binds to HJ cruciform DNA, conferring on it an open structure. The RuvB hexamer acts as an ATP-dependent pump, pulling dsDNA into and through the RuvAB complex. HJ branch migration allows RuvC to scan DNA until it finds its consensus sequence, where it cleaves and resolves the cruciform DNA. The sequence is that of Holliday junction branch migration complex subunit RuvA from Marinomonas sp. (strain MWYL1).